The primary structure comprises 366 residues: MSEVILQLQKRLGETQLDVDLRLPAVGICAIFGRSGAGKTSLINLISGLTTPDVGEIHLAGRTLFSSSQGIQLPIEQRKIGYVFQDARLFPHYTVRGNLNYGVTDADPEYFASVTRLLALEPLLVRYPRDLSGGEKQRVAIGRALLSKPDLLLMDEPLASLDMPRKKEVMPFLENLAQHFRLPILYVSHSMQEILRLADHLVVLEQGKVLSAGPIEQVWSSKAMRPWQSFSEQSTLFSATVAKHHQTYGLTQVRLAEDVWLWVQQVEADVGSSVRMQVRANDVSIALDKPTASSIRNILPARIVAIEHQQPSKKSVSLKLELAPHCYLWAVVTEWAHAELALEVGMPVFAQIKGVSVAQRDVILTN.

Residues 1 to 231 form the ABC transporter domain; the sequence is MSEVILQLQK…KAMRPWQSFS (231 aa). Position 33 to 40 (33 to 40) interacts with ATP; it reads GRSGAGKT. The region spanning 292-361 is the Mop domain; sequence ASSIRNILPA…IKGVSVAQRD (70 aa).

The protein belongs to the ABC transporter superfamily. Molybdate importer (TC 3.A.1.8) family. In terms of assembly, the complex is composed of two ATP-binding proteins (ModC), two transmembrane proteins (ModB) and a solute-binding protein (ModA).

It localises to the cell inner membrane. It catalyses the reaction molybdate(out) + ATP + H2O = molybdate(in) + ADP + phosphate + H(+). Part of the ABC transporter complex ModABC involved in molybdenum import. Responsible for energy coupling to the transport system. The sequence is that of Molybdenum import ATP-binding protein ModC from Vibrio cholerae serotype O1 (strain ATCC 39315 / El Tor Inaba N16961).